Reading from the N-terminus, the 368-residue chain is Alanine racemase (368 aa).

Lysine 40 functions as the Proton acceptor; specific for D-alanine in the catalytic mechanism. Lysine 40 carries the post-translational modification N6-(pyridoxal phosphate)lysine. Substrate is bound at residue arginine 134. The active-site Proton acceptor; specific for L-alanine is tyrosine 263. Methionine 310 contributes to the substrate binding site.

It belongs to the alanine racemase family. Pyridoxal 5'-phosphate serves as cofactor.

It catalyses the reaction L-alanine = D-alanine. It participates in amino-acid biosynthesis; D-alanine biosynthesis; D-alanine from L-alanine: step 1/1. Catalyzes the interconversion of L-alanine and D-alanine. May also act on other amino acids. The protein is Alanine racemase (alr) of Listeria monocytogenes serovar 1/2a (strain ATCC BAA-679 / EGD-e).